Here is a 338-residue protein sequence, read N- to C-terminus: NADPH dehydrogenase (338 aa).

23 to 26 (SPMC) is a binding site for FMN. Position 28 (Tyr-28) interacts with substrate. Positions 60 and 102 each coordinate FMN. Position 163–166 (163–166 (HGAH)) interacts with substrate. FMN is bound by residues Arg-214 and 306-307 (AR).

The protein belongs to the NADH:flavin oxidoreductase/NADH oxidase family. NamA subfamily. In terms of assembly, homotetramer. It depends on FMN as a cofactor.

The enzyme catalyses A + NADPH + H(+) = AH2 + NADP(+). Catalyzes the reduction of the double bond of an array of alpha,beta-unsaturated aldehydes and ketones. It also reduces the nitro group of nitroester and nitroaromatic compounds. It could have a role in detoxification processes. This Halalkalibacterium halodurans (strain ATCC BAA-125 / DSM 18197 / FERM 7344 / JCM 9153 / C-125) (Bacillus halodurans) protein is NADPH dehydrogenase.